The primary structure comprises 75 residues: Small ribosomal subunit protein bS18 (75 aa).

Belongs to the bacterial ribosomal protein bS18 family. Part of the 30S ribosomal subunit. Forms a tight heterodimer with protein bS6.

In terms of biological role, binds as a heterodimer with protein bS6 to the central domain of the 16S rRNA, where it helps stabilize the platform of the 30S subunit. This is Small ribosomal subunit protein bS18 from Vibrio atlanticus (strain LGP32) (Vibrio splendidus (strain Mel32)).